A 176-amino-acid chain; its full sequence is Inorganic pyrophosphatase (176 aa).

Substrate-binding residues include lysine 30, arginine 44, and tyrosine 56. The Mg(2+) site is built by aspartate 66, aspartate 71, and aspartate 103. A substrate-binding site is contributed by tyrosine 142.

It belongs to the PPase family. As to quaternary structure, homohexamer. Mg(2+) is required as a cofactor.

It is found in the cytoplasm. It carries out the reaction diphosphate + H2O = 2 phosphate + H(+). Its function is as follows. Catalyzes the hydrolysis of inorganic pyrophosphate (PPi) forming two phosphate ions. The polypeptide is Inorganic pyrophosphatase (Vibrio vulnificus (strain CMCP6)).